The primary structure comprises 242 residues: Adenylate kinase 1 (242 aa).

ATP contacts are provided by residues 38–43 (GSGKGT) and glycine 42. The interval 58 to 87 (STGDLLREAAEKKTELGLKIKNIINEGKLV) is NMP. Residues threonine 59, arginine 64, 85–87 (KLV), glycine 113, 113–116 (GYPR), and glutamine 120 contribute to the AMP site. The interval 154-191 (GRLIHKPSGRIYHKIFNPPKVPFRDDVTNEPLIQREDD) is LID. The ATP site is built by arginine 155 and tyrosine 165. An AMP-binding site is contributed by arginine 199. Alanine 229 serves as a coordination point for ATP.

The protein belongs to the adenylate kinase family.

Its subcellular location is the cytoplasm. It catalyses the reaction AMP + ATP = 2 ADP. Its activity is regulated as follows. Inhibited by the dinucleoside pentaphosphate compound P1,P5-di(adenosine-5') pentaphosphate (AP5A). Functionally, catalyzes the reversible transfer of the terminal phosphate group between ATP and AMP. Has very low activity with CTP, GTP, ITP and UTP and no activity with GMP, CMP, UMP or IMP in vitro. The protein is Adenylate kinase 1 of Plasmodium falciparum (isolate 3D7).